Reading from the N-terminus, the 163-residue chain is Succinate dehydrogenase assembly factor 2-B, mitochondrial (163 aa).

Residues 1-23 constitute a mitochondrion transit peptide; the sequence is MFRQLRLTMDISGWIFMPWRRSL.

Belongs to the SDHAF2 family. In terms of assembly, interacts with the flavoprotein subunit within the SDH catalytic dimer.

The protein resides in the mitochondrion matrix. Plays an essential role in the assembly of succinate dehydrogenase (SDH), an enzyme complex (also referred to as respiratory complex II) that is a component of both the tricarboxylic acid (TCA) cycle and the mitochondrial electron transport chain, and which couples the oxidation of succinate to fumarate with the reduction of ubiquinone (coenzyme Q) to ubiquinol. Required for flavinylation (covalent attachment of FAD) of the flavoprotein subunit of the SDH catalytic dimer. This Drosophila ananassae (Fruit fly) protein is Succinate dehydrogenase assembly factor 2-B, mitochondrial.